Reading from the N-terminus, the 468-residue chain is Glutamyl-tRNA reductase (468 aa).

Substrate contacts are provided by residues 49-52 (TCNR), S109, 114-116 (EQQ), and Q120. The active-site Nucleophile is C50. Residue 189-194 (GAGAMG) participates in NADP(+) binding. A disordered region spans residues 443-468 (VPSGFDAESRRGGGDMQSSPKRSPSN). Residues 458–468 (MQSSPKRSPSN) show a composition bias toward polar residues.

It belongs to the glutamyl-tRNA reductase family. In terms of assembly, homodimer.

The enzyme catalyses (S)-4-amino-5-oxopentanoate + tRNA(Glu) + NADP(+) = L-glutamyl-tRNA(Glu) + NADPH + H(+). It functions in the pathway porphyrin-containing compound metabolism; protoporphyrin-IX biosynthesis; 5-aminolevulinate from L-glutamyl-tRNA(Glu): step 1/2. Functionally, catalyzes the NADPH-dependent reduction of glutamyl-tRNA(Glu) to glutamate 1-semialdehyde (GSA). The polypeptide is Glutamyl-tRNA reductase (Mycobacterium tuberculosis (strain ATCC 25177 / H37Ra)).